The chain runs to 501 residues: Glycerol kinase (501 aa).

T16 lines the ADP pocket. ATP is bound by residues T16, T17, and S18. A sn-glycerol 3-phosphate-binding site is contributed by T16. Position 20 (R20) interacts with ADP. Positions 84, 85, 135, and 242 each coordinate sn-glycerol 3-phosphate. Glycerol is bound by residues R84, E85, Y135, D242, and Q243. T264 and G307 together coordinate ADP. ATP contacts are provided by T264, G307, Q311, and G408. Residue G408 participates in ADP binding.

The protein belongs to the FGGY kinase family.

It catalyses the reaction glycerol + ATP = sn-glycerol 3-phosphate + ADP + H(+). The protein operates within polyol metabolism; glycerol degradation via glycerol kinase pathway; sn-glycerol 3-phosphate from glycerol: step 1/1. Functionally, key enzyme in the regulation of glycerol uptake and metabolism. Catalyzes the phosphorylation of glycerol to yield sn-glycerol 3-phosphate. This chain is Glycerol kinase, found in Saccharolobus islandicus (strain L.S.2.15 / Lassen #1) (Sulfolobus islandicus).